Consider the following 503-residue polypeptide: Aspartyl/glutamyl-tRNA(Asn/Gln) amidotransferase subunit B (503 aa).

This sequence belongs to the GatB/GatE family. GatB subfamily. As to quaternary structure, heterotrimer of A, B and C subunits.

The enzyme catalyses L-glutamyl-tRNA(Gln) + L-glutamine + ATP + H2O = L-glutaminyl-tRNA(Gln) + L-glutamate + ADP + phosphate + H(+). The catalysed reaction is L-aspartyl-tRNA(Asn) + L-glutamine + ATP + H2O = L-asparaginyl-tRNA(Asn) + L-glutamate + ADP + phosphate + 2 H(+). Functionally, allows the formation of correctly charged Asn-tRNA(Asn) or Gln-tRNA(Gln) through the transamidation of misacylated Asp-tRNA(Asn) or Glu-tRNA(Gln) in organisms which lack either or both of asparaginyl-tRNA or glutaminyl-tRNA synthetases. The reaction takes place in the presence of glutamine and ATP through an activated phospho-Asp-tRNA(Asn) or phospho-Glu-tRNA(Gln). The polypeptide is Aspartyl/glutamyl-tRNA(Asn/Gln) amidotransferase subunit B (Rhodococcus erythropolis (strain PR4 / NBRC 100887)).